The primary structure comprises 536 residues: uncharacterized protein (536 aa).

The SWIM-type zinc-finger motif lies at 71 to 98 (LFVIVKSGCSCPSGRICRHMLAVFLYVY). The stretch at 482-528 (YKEAARYLKKLRTLYKKAKKQKVWERYIQLLSSHYKRLRALQEELQK) forms a coiled coil.

This is an uncharacterized protein from Bacillus subtilis (strain 168).